Reading from the N-terminus, the 488-residue chain is Histamine H1 receptor (488 aa).

At 1-38 (MSFLPGMTPVTLSNFSWALEDRMLEGNSTTTPTRQLMP) the chain is on the extracellular side. Asparagine 14 and asparagine 27 each carry an N-linked (GlcNAc...) asparagine glycan. A helical transmembrane segment spans residues 39–59 (LVVVLSSVSLVTVALNLLVLY). Residues 60–73 (AVRSERKLHTVGNL) lie on the Cytoplasmic side of the membrane. The helical transmembrane segment at 74-98 (YIVSLSVADLIVGAVVMPMSILYLH) threads the bilayer. Residues 99–106 (RSAWILGR) lie on the Extracellular side of the membrane. Residues 107–132 (PLCLFWLSMDYVASTASIFSVFILCI) traverse the membrane as a helical segment. A disulfide bridge links cysteine 109 with cysteine 189. Positions 116 and 121 each coordinate histamine. An important for agonist binding region spans residues 116-121 (DYVAST). Residues 133-153 (DRYRSVQQPLRYLRYRTKTRA) are Cytoplasmic-facing. A phosphothreonine mark is found at threonine 149 and threonine 151. A helical transmembrane segment spans residues 154–173 (SATILGAWLLSFLWVIPILG). Residues 174–197 (WHHFMAPTSEPREKKCETDFYDVT) lie on the Extracellular side of the membrane. The helical transmembrane segment at 198–220 (WFKVMTAIINFYLPTLLMLWFYI) threads the bilayer. Histamine is bound at residue asparagine 207. Residues 221-417 (RIYKAVRRHC…LNRERKAAKQ (197 aa)) are Cytoplasmic-facing. At serine 239 the chain carries Phosphoserine. Residues 259–274 (RMGKESPWEDPKRCSK) are compositionally biased toward basic and acidic residues. The tract at residues 259 to 285 (RMGKESPWEDPKRCSKDASGVHTPMPS) is disordered. A phosphoserine mark is found at serine 345, serine 381, serine 383, serine 397, and serine 399. A helical transmembrane segment spans residues 418–441 (LGCIMAAFILCWIPYFVFFMVIAF). The segment at 425-429 (FILCW) is important for agonist binding. Tyrosine 432 contacts histamine. The cysteines at positions 442 and 445 are disulfide-linked. Topologically, residues 442–447 (CKSCSN) are extracellular. Residues 448–470 (EPVHMFTIWLGYLNSTLNPLIYP) form a helical membrane-spanning segment. Topologically, residues 471–488 (LCNENFRKTFKRILRIPP) are cytoplasmic.

Belongs to the G-protein coupled receptor 1 family. Post-translationally, phosphorylation at sites in the second and third cytoplasmic loops independently contribute to agonist-induced receptor down-regulation.

The protein localises to the cell membrane. In terms of biological role, G-protein-coupled receptor for histamine, a biogenic amine that functions as an immune modulator and a neurotransmitter. Through the H1 receptor, histamine mediates the contraction of smooth muscles and increases capillary permeability due to contraction of terminal venules. Also mediates neurotransmission in the central nervous system and thereby regulates circadian rhythms, emotional and locomotor activities as well as cognitive functions. The polypeptide is Histamine H1 receptor (Cavia porcellus (Guinea pig)).